A 336-amino-acid chain; its full sequence is Zinc-type alcohol dehydrogenase-like protein SE_1777 (336 aa).

It belongs to the zinc-containing alcohol dehydrogenase family. Quinone oxidoreductase subfamily.

The protein is Zinc-type alcohol dehydrogenase-like protein SE_1777 of Staphylococcus epidermidis (strain ATCC 12228 / FDA PCI 1200).